The following is a 77-amino-acid chain: UPF0349 protein lin2491 (77 aa).

The protein belongs to the UPF0349 family.

The chain is UPF0349 protein lin2491 from Listeria innocua serovar 6a (strain ATCC BAA-680 / CLIP 11262).